Consider the following 501-residue polypeptide: Dynein regulatory complex subunit 5 (501 aa).

The span at 1 to 23 (MQETVTTSALLDPSHSSVSTQDK) shows a compositional bias: polar residues. Disordered stretches follow at residues 1-56 (MQET…HPGA) and 203-222 (PAQLRPGDQSDSGSEGEMEE). Residues 24 to 34 (SSTGGHTSSTG) are compositionally biased toward low complexity. The segment covering 35-49 (PQPSKPSITPVSAKS) has biased composition (polar residues). LRR repeat units follow at residues 308-321 (VLEELDLSHNLIGD), 335-355 (RLRVLNLANNQVRAPGAQSLA), 363-383 (NLISLNLRLNCIEDEGGQALA), 391-411 (CLTTLHLGGNELSEPTATLLS), and 419-439 (TLTSINLSCNHIGLDGGKQLL).

It belongs to the DRC5 family. In terms of assembly, component of the nexin-dynein regulatory complex (N-DRC). Interacts with DRC1. Interacts with FBXL13/DRC6, DRC3 and DRC7.

Its subcellular location is the cell projection. The protein resides in the cilium. The protein localises to the flagellum. It is found in the cytoplasm. It localises to the cytoskeleton. Its subcellular location is the flagellum axoneme. Functionally, component of the nexin-dynein regulatory complex (N-DRC) a key regulator of ciliary/flagellar motility which maintains the alignment and integrity of the distal axoneme and regulates microtubule sliding in motile axonemes. May play a role in the assembly of N-DRC. May be required for sperm motility. The chain is Dynein regulatory complex subunit 5 (TCTE1) from Macaca fascicularis (Crab-eating macaque).